Reading from the N-terminus, the 339-residue chain is Holliday junction branch migration complex subunit RuvB (339 aa).

The tract at residues 2-187 (KDVNDEERII…FGIIEHMQYY (186 aa)) is large ATPase domain (RuvB-L). Residues L26, R27, G68, K71, T72, T73, 134 to 136 (EDF), R177, Y187, and R224 contribute to the ATP site. T72 contacts Mg(2+). Residues 188 to 258 (SIDDLEKIIQ…TTKHSLHLLE (71 aa)) are small ATPAse domain (RuvB-S). Residues 261-339 (DEGLDQTDRK…QLGYPPKKAE (79 aa)) form a head domain (RuvB-H) region. Positions 316 and 321 each coordinate DNA.

This sequence belongs to the RuvB family. Homohexamer. Forms an RuvA(8)-RuvB(12)-Holliday junction (HJ) complex. HJ DNA is sandwiched between 2 RuvA tetramers; dsDNA enters through RuvA and exits via RuvB. An RuvB hexamer assembles on each DNA strand where it exits the tetramer. Each RuvB hexamer is contacted by two RuvA subunits (via domain III) on 2 adjacent RuvB subunits; this complex drives branch migration. In the full resolvosome a probable DNA-RuvA(4)-RuvB(12)-RuvC(2) complex forms which resolves the HJ.

It localises to the cytoplasm. It catalyses the reaction ATP + H2O = ADP + phosphate + H(+). Functionally, the RuvA-RuvB-RuvC complex processes Holliday junction (HJ) DNA during genetic recombination and DNA repair, while the RuvA-RuvB complex plays an important role in the rescue of blocked DNA replication forks via replication fork reversal (RFR). RuvA specifically binds to HJ cruciform DNA, conferring on it an open structure. The RuvB hexamer acts as an ATP-dependent pump, pulling dsDNA into and through the RuvAB complex. RuvB forms 2 homohexamers on either side of HJ DNA bound by 1 or 2 RuvA tetramers; 4 subunits per hexamer contact DNA at a time. Coordinated motions by a converter formed by DNA-disengaged RuvB subunits stimulates ATP hydrolysis and nucleotide exchange. Immobilization of the converter enables RuvB to convert the ATP-contained energy into a lever motion, pulling 2 nucleotides of DNA out of the RuvA tetramer per ATP hydrolyzed, thus driving DNA branch migration. The RuvB motors rotate together with the DNA substrate, which together with the progressing nucleotide cycle form the mechanistic basis for DNA recombination by continuous HJ branch migration. Branch migration allows RuvC to scan DNA until it finds its consensus sequence, where it cleaves and resolves cruciform DNA. In Lactobacillus gasseri (strain ATCC 33323 / DSM 20243 / BCRC 14619 / CIP 102991 / JCM 1131 / KCTC 3163 / NCIMB 11718 / NCTC 13722 / AM63), this protein is Holliday junction branch migration complex subunit RuvB.